A 938-amino-acid polypeptide reads, in one-letter code: Ankyrin repeat and LEM domain-containing protein 2 (938 aa).

Residues 1–12 (MLWPRLAAAEWA) are Lumenal-facing. The helical; Signal-anchor for type III membrane protein transmembrane segment at 13–32 (ALAWELLGASVLLIAVRWLV) threads the bilayer. Over 33-938 (RRLGPRPGGL…MARLAELAAL (906 aa)) the chain is Cytoplasmic. The 45-residue stretch at 69 to 113 (LARLKLLNPDDLREEIVKAGLKCGPITSTTRFIFEKKLAQALLEQ) folds into the LEM domain. Phosphoserine occurs at positions 259 and 268. Residues 411–440 (GYDTPLHFACKFGNADVVNVLSSHHLIVKN) form an ANK repeat. A phosphoserine mark is found at Ser488, Ser496, Ser512, and Ser528. Positions 609–627 (GKKAQQETGEREASCRDKA) are enriched in basic and acidic residues. The tract at residues 609–636 (GKKAQQETGEREASCRDKATTSGSNSIS) is disordered. Ser662, Ser804, Ser896, and Ser914 each carry phosphoserine. The disordered stretch occupies residues 870-924 (RQSWPSPAVKGRFKSQLPDLSGPHSYSPGRNSVAGSNPAKPGLGSPGRYSPVHGS).

The protein belongs to the ANKLE2 family. Interacts with BAF/BANF1. Interacts with protein phosphatase 2A (PP2A) components PPP2C (PPP2CA or PPP2CB) and PPP2R1A. In terms of assembly, (Microbial infection) May interact with non-structural protein 4A/NS4A from Zika virus strains Mr-766 or French Polynesia 10087PF/2013; the interaction may inhibit ANKLE2 function and contribute to defects in brain development, such as microcephaly.

It localises to the endoplasmic reticulum membrane. Involved in mitotic nuclear envelope reassembly by promoting dephosphorylation of BAF/BANF1 during mitotic exit. Coordinates the control of BAF/BANF1 dephosphorylation by inhibiting VRK1 kinase and promoting dephosphorylation of BAF/BANF1 by protein phosphatase 2A (PP2A), thereby facilitating nuclear envelope assembly. May regulate nuclear localization of VRK1 in non-dividing cells. It is unclear whether it acts as a real PP2A regulatory subunit or whether it is involved in recruitment of the PP2A complex. Involved in brain development. This chain is Ankyrin repeat and LEM domain-containing protein 2 (ANKLE2), found in Homo sapiens (Human).